Reading from the N-terminus, the 258-residue chain is ADP-dependent (S)-NAD(P)H-hydrate dehydratase (258 aa).

The 258-residue stretch at 1–258 (MGRLQRTLSN…VIECIPKTIR (258 aa)) folds into the YjeF C-terminal domain. Gly201 is a binding site for AMP. Asp202 is a (6S)-NADPHX binding site.

It belongs to the NnrD/CARKD family. Homotetramer. Requires Mg(2+) as cofactor.

The enzyme catalyses (6S)-NADHX + ADP = AMP + phosphate + NADH + H(+). The catalysed reaction is (6S)-NADPHX + ADP = AMP + phosphate + NADPH + H(+). Catalyzes the dehydration of the S-form of NAD(P)HX at the expense of ADP, which is converted to AMP. Together with NAD(P)HX epimerase, which catalyzes the epimerization of the S- and R-forms, the enzyme allows the repair of both epimers of NAD(P)HX, a damaged form of NAD(P)H that is a result of enzymatic or heat-dependent hydration. This is ADP-dependent (S)-NAD(P)H-hydrate dehydratase from Natrialba magadii (strain ATCC 43099 / DSM 3394 / CCM 3739 / CIP 104546 / IAM 13178 / JCM 8861 / NBRC 102185 / NCIMB 2190 / MS3) (Natronobacterium magadii).